Here is a 419-residue protein sequence, read N- to C-terminus: Tyrosine--tRNA ligase (419 aa).

Tyr34 lines the L-tyrosine pocket. The short motif at 39 to 48 is the 'HIGH' region element; that stretch reads PSGDSMHIGH. L-tyrosine contacts are provided by Tyr168 and Gln172. Positions 230-234 match the 'KMSKS' region motif; sequence KFGKS. Residue Lys233 participates in ATP binding. In terms of domain architecture, S4 RNA-binding spans 352-418; it reads ANLVDWLVTL…GKKKYFLVSY (67 aa).

The protein belongs to the class-I aminoacyl-tRNA synthetase family. TyrS type 1 subfamily. As to quaternary structure, homodimer.

It is found in the cytoplasm. The enzyme catalyses tRNA(Tyr) + L-tyrosine + ATP = L-tyrosyl-tRNA(Tyr) + AMP + diphosphate + H(+). In terms of biological role, catalyzes the attachment of tyrosine to tRNA(Tyr) in a two-step reaction: tyrosine is first activated by ATP to form Tyr-AMP and then transferred to the acceptor end of tRNA(Tyr). This Listeria monocytogenes serovar 1/2a (strain ATCC BAA-679 / EGD-e) protein is Tyrosine--tRNA ligase.